The sequence spans 374 residues: Peptide chain release factor 2 (374 aa).

N5-methylglutamine is present on Q256.

It belongs to the prokaryotic/mitochondrial release factor family. Post-translationally, methylated by PrmC. Methylation increases the termination efficiency of RF2.

Its subcellular location is the cytoplasm. Its function is as follows. Peptide chain release factor 2 directs the termination of translation in response to the peptide chain termination codons UGA and UAA. In Mycobacterium leprae (strain Br4923), this protein is Peptide chain release factor 2.